Here is a 199-residue protein sequence, read N- to C-terminus: ATP synthase subunit b (199 aa).

A helical membrane pass occupies residues 5 to 25 (SFVTTLSVCVMILGLAALGFA).

It belongs to the ATPase B chain family. F-type ATPases have 2 components, F(1) - the catalytic core - and F(0) - the membrane proton channel. F(1) has five subunits: alpha(3), beta(3), gamma(1), delta(1), epsilon(1). F(0) has three main subunits: a(1), b(2) and c(10-14). The alpha and beta chains form an alternating ring which encloses part of the gamma chain. F(1) is attached to F(0) by a central stalk formed by the gamma and epsilon chains, while a peripheral stalk is formed by the delta and b chains.

Its subcellular location is the cell inner membrane. Functionally, f(1)F(0) ATP synthase produces ATP from ADP in the presence of a proton or sodium gradient. F-type ATPases consist of two structural domains, F(1) containing the extramembraneous catalytic core and F(0) containing the membrane proton channel, linked together by a central stalk and a peripheral stalk. During catalysis, ATP synthesis in the catalytic domain of F(1) is coupled via a rotary mechanism of the central stalk subunits to proton translocation. Component of the F(0) channel, it forms part of the peripheral stalk, linking F(1) to F(0). The polypeptide is ATP synthase subunit b (Citrifermentans bemidjiense (strain ATCC BAA-1014 / DSM 16622 / JCM 12645 / Bem) (Geobacter bemidjiensis)).